The sequence spans 111 residues: UPF0342 protein gbs1446 (111 aa).

The protein belongs to the UPF0342 family.

The protein is UPF0342 protein gbs1446 of Streptococcus agalactiae serotype III (strain NEM316).